The sequence spans 416 residues: MPYNFCLPSLSCRTSCSSRPCVPPSCHSCTLPGACNIPANVSNCNWFCEGSFNGSEKETMQFLNDRLASYLEKVRQLERDNAELENLIRERSQQQEPLLCPSYQSYFKTIEELQQKILCTKSENARLVVQIDNAKLAADDFRTKYQTELSLRQLVESDINGLRRILDELTLCKSDLEAQVESLKEELLCLKSNHEQEVNTLRCQLGDRLNVEVDAAPTVDLNRVLNETRSQYEALVETNRREVEQWFTTQTEELNKQVVSSSEQLQSYQAEIIELRRTVNALEIELQAQHNLRDSLENTLTESEARYSSQLSQVQSLITNVESQLAEIRSDLERQNQEYQVLLDVRARLECEINTYRSLLESEDCNLPSNPCATTNACSKPIGPCLSNPCTSCVPPAPCTPCAPRPRCGPCNSFVR.

Residues 1-56 (MPYNFCLPSLSCRTSCSSRPCVPPSCHSCTLPGACNIPANVSNCNWFCEGSFNGSE) are head. The IF rod domain occupies 56 to 367 (EKETMQFLND…SLLESEDCNL (312 aa)). The tract at residues 57 to 91 (KETMQFLNDRLASYLEKVRQLERDNAELENLIRER) is coil 1A. The linker 1 stretch occupies residues 92 to 102 (SQQQEPLLCPS). The segment at 103 to 203 (YQSYFKTIEE…HEQEVNTLRC (101 aa)) is coil 1B. Residues 204–219 (QLGDRLNVEVDAAPTV) are linker 12. Residues 220 to 363 (DLNRVLNETR…NTYRSLLESE (144 aa)) are coil 2. The interval 364–416 (DCNLPSNPCATTNACSKPIGPCLSNPCTSCVPPAPCTPCAPRPRCGPCNSFVR) is tail.

It belongs to the intermediate filament family. As to expression, present in scalp but not in hairless skin. Abundantly expressed in the differentiating cortex of growing (anagen) hair. Expression is restricted to the keratinocytes of the hair cortex and is absent from inner root sheath and medulla.

The protein is Keratin, type I cuticular Ha1 (KRT31) of Homo sapiens (Human).